A 329-amino-acid chain; its full sequence is MIVVTGAAGFIGSNLVRGLNRRGIQDIIAVDDLTDGDKFRNLVDCSIADYLDKDEFRERVRGGNLPALRAVLHQGACSDTTERNGRYMLDNNYRVTLELFEYCQAERVPFLYASSAAVYGGSSVYVEDPANEHPLNVYGYSKLLFDQVLRTRMDSLTAQVVGLRYFNVYGPHEQHKGRMASVAFHNMNQFLAEGHVRLFAGWDGYEDGGQSRDFISVEDVVAVNLHFLDNPGQSGVFNCGTGRAQPFNDVAAAVVNTLRAERGEAALPLAELVKKGLLRYIPFPDDLKGRYQSYTQADVGRLRAAGFSAPMRDVQTGVSEYVRYWRALK.

NADP(+) is bound by residues 10–11 (FI), 31–32 (DD), Lys-38, Lys-53, 74–78 (QGACS), and Asn-91. Tyr-138 (proton acceptor) is an active-site residue. Lys-142 contributes to the NADP(+) binding site. Asn-167 serves as a coordination point for substrate. The NADP(+) site is built by Val-168 and Lys-176. The active-site Proton acceptor is Lys-176. Residues Arg-178, His-185, 199–202 (FAGW), Arg-212, and Tyr-291 each bind substrate.

Belongs to the NAD(P)-dependent epimerase/dehydratase family. HldD subfamily. In terms of assembly, homopentamer. It depends on NADP(+) as a cofactor.

It carries out the reaction ADP-D-glycero-beta-D-manno-heptose = ADP-L-glycero-beta-D-manno-heptose. Its pathway is nucleotide-sugar biosynthesis; ADP-L-glycero-beta-D-manno-heptose biosynthesis; ADP-L-glycero-beta-D-manno-heptose from D-glycero-beta-D-manno-heptose 7-phosphate: step 4/4. It functions in the pathway bacterial outer membrane biogenesis; LPS core biosynthesis. In terms of biological role, catalyzes the interconversion between ADP-D-glycero-beta-D-manno-heptose and ADP-L-glycero-beta-D-manno-heptose via an epimerization at carbon 6 of the heptose. This Bordetella parapertussis (strain 12822 / ATCC BAA-587 / NCTC 13253) protein is ADP-L-glycero-D-manno-heptose-6-epimerase.